A 212-amino-acid chain; its full sequence is MATAPYGVRLLVGAATVAVEETMKLPRTILMYPMTLASQAAHVVMRFQQGLAELVIKGDNTLETLFPPKDEKPEWATFDEDLPDALEGTSIPLLGLSDASEAKNDDRRSDGRFALYSVSDTPETTTASRSADRSTNPKTAKHPKSAAKPTVPTPAVAAELDYPALTLAQLRARLHTLDVPELEALLAYEQATKARAPFQTLLANRITRATAK.

Residues 97–151 (SDASEAKNDDRRSDGRFALYSVSDTPETTTASRSADRSTNPKTAKHPKSAAKPTV) form a disordered region. The span at 100-111 (SEAKNDDRRSDG) shows a compositional bias: basic and acidic residues.

This is an uncharacterized protein from Mycobacterium tuberculosis (strain CDC 1551 / Oshkosh).